A 501-amino-acid chain; its full sequence is Vitamin D 25-hydroxylase (501 aa).

A substrate-binding site is contributed by A250. C448 is a heme binding site.

The protein belongs to the cytochrome P450 family. In terms of assembly, homodimer. The cofactor is heme. In terms of tissue distribution, highly expressed in the liver and testis.

It is found in the endoplasmic reticulum membrane. Its subcellular location is the microsome membrane. It carries out the reaction calciol + reduced [NADPH--hemoprotein reductase] + O2 = calcidiol + oxidized [NADPH--hemoprotein reductase] + H2O + H(+). It catalyses the reaction vitamin D2 + reduced [NADPH--hemoprotein reductase] + O2 = 25-hydroxyvitamin D2 + oxidized [NADPH--hemoprotein reductase] + H2O + H(+). The enzyme catalyses 1alpha-hydroxyvitamin D2 + reduced [NADPH--hemoprotein reductase] + O2 = 1alpha,25-dihydroxyvitamin D2 + oxidized [NADPH--hemoprotein reductase] + H2O + H(+). The catalysed reaction is alfacalcidol + reduced [NADPH--hemoprotein reductase] + O2 = calcitriol + oxidized [NADPH--hemoprotein reductase] + H2O + H(+). Its pathway is hormone biosynthesis; vitamin D biosynthesis. A cytochrome P450 monooxygenase involved in activation of vitamin D precursors. Catalyzes hydroxylation at C-25 of both forms of vitamin D, vitamin D(2) and D(3) (calciol). Can metabolize vitamin D analogs/prodrugs 1alpha-hydroxyvitamin D(2) (doxercalciferol) and 1alpha-hydroxyvitamin D(3) (alfacalcidol) forming 25-hydroxy derivatives. Mechanistically, uses molecular oxygen inserting one oxygen atom into a substrate, and reducing the second into a water molecule, with two electrons provided by NADPH via cytochrome P450 reductase (CPR; NADPH-ferrihemoprotein reductase). The polypeptide is Vitamin D 25-hydroxylase (Cyp2r1) (Mus musculus (Mouse)).